Consider the following 478-residue polypeptide: ATP synthase subunit beta (478 aa).

ATP is bound at residue 164-171 (GGAGVGKT).

This sequence belongs to the ATPase alpha/beta chains family. In terms of assembly, F-type ATPases have 2 components, CF(1) - the catalytic core - and CF(0) - the membrane proton channel. CF(1) has five subunits: alpha(3), beta(3), gamma(1), delta(1), epsilon(1). CF(0) has three main subunits: a(1), b(2) and c(9-12). The alpha and beta chains form an alternating ring which encloses part of the gamma chain. CF(1) is attached to CF(0) by a central stalk formed by the gamma and epsilon chains, while a peripheral stalk is formed by the delta and b chains.

It localises to the cell membrane. The enzyme catalyses ATP + H2O + 4 H(+)(in) = ADP + phosphate + 5 H(+)(out). Produces ATP from ADP in the presence of a proton gradient across the membrane. The catalytic sites are hosted primarily by the beta subunits. This Corynebacterium kroppenstedtii (strain DSM 44385 / JCM 11950 / CIP 105744 / CCUG 35717) protein is ATP synthase subunit beta.